The following is a 154-amino-acid chain: Endoribonuclease YbeY (154 aa).

Zn(2+) contacts are provided by His117, His121, and His127.

It belongs to the endoribonuclease YbeY family. It depends on Zn(2+) as a cofactor.

It is found in the cytoplasm. In terms of biological role, single strand-specific metallo-endoribonuclease involved in late-stage 70S ribosome quality control and in maturation of the 3' terminus of the 16S rRNA. The polypeptide is Endoribonuclease YbeY (Aromatoleum aromaticum (strain DSM 19018 / LMG 30748 / EbN1) (Azoarcus sp. (strain EbN1))).